The sequence spans 245 residues: Probable phosphatase YPTB2019 (245 aa).

9 residues coordinate Zn(2+): His-7, His-9, His-15, His-40, Glu-73, His-101, His-131, Asp-192, and His-194.

This sequence belongs to the PHP family. In terms of assembly, homotrimer. Requires Zn(2+) as cofactor.

The polypeptide is Probable phosphatase YPTB2019 (Yersinia pseudotuberculosis serotype I (strain IP32953)).